A 132-amino-acid polypeptide reads, in one-letter code: Glycerol-3-phosphate cytidylyltransferase (132 aa).

CTP is bound by residues 9–10 (TY) and 14–17 (HYGH). Lys44 provides a ligand contact to substrate. Residue Lys46 coordinates CTP. Lys77 is a substrate binding site. Residue 113-120 (RTEGISTT) coordinates CTP.

Belongs to the cytidylyltransferase family. As to quaternary structure, homotetramer or homodimer.

The protein resides in the cytoplasm. It carries out the reaction sn-glycerol 3-phosphate + CTP + H(+) = CDP-glycerol + diphosphate. It functions in the pathway cell wall biogenesis; poly(ribitol phosphate) teichoic acid biosynthesis. Its function is as follows. Catalyzes the transfer of the cytidylyl group of CTP to sn-glycerol 3-phosphate so the activated glycerol 3-phosphate can be used for teichoic acid synthesis, via incorporation into both the linkage unit by TarB and TarF. This chain is Glycerol-3-phosphate cytidylyltransferase, found in Staphylococcus aureus (strain NCTC 8325 / PS 47).